The following is a 590-amino-acid chain: DNA primase (590 aa).

The CHC2-type zinc finger occupies C37–C61. The Toprim domain maps to G255–P337. Mg(2+) contacts are provided by E261, D305, and D307.

It belongs to the DnaG primase family. In terms of assembly, monomer. Interacts with DnaB. The cofactor is Zn(2+). Requires Mg(2+) as cofactor.

The catalysed reaction is ssDNA + n NTP = ssDNA/pppN(pN)n-1 hybrid + (n-1) diphosphate.. Functionally, RNA polymerase that catalyzes the synthesis of short RNA molecules used as primers for DNA polymerase during DNA replication. The chain is DNA primase from Neisseria meningitidis serogroup B (strain ATCC BAA-335 / MC58).